The primary structure comprises 671 residues: UvrABC system protein B (671 aa).

The Helicase ATP-binding domain occupies 25-412; that stretch reads EGIDAGLAHQ…AGRIVEQVVR (388 aa). 38–45 contributes to the ATP binding site; it reads GVTGSGKT. The short motif at 91–114 is the Beta-hairpin element; sequence YYDYYQPEAYVPSSDTFIEKDASI. The Helicase C-terminal domain occupies 429 to 582; it reads QVDDLLSEIH…QIAFNLEHGI (154 aa). The tract at residues 601-625 is disordered; sequence PGSRSKKRKGMAKAAEESARYENEL. Positions 614 to 625 are enriched in basic and acidic residues; sequence AAEESARYENEL. The 36-residue stretch at 632–667 folds into the UVR domain; it reads NKRIRQLEEKMYQLARDLEFEAAAQMRDEIGKLRER.

It belongs to the UvrB family. As to quaternary structure, forms a heterotetramer with UvrA during the search for lesions. Interacts with UvrC in an incision complex.

Its subcellular location is the cytoplasm. The UvrABC repair system catalyzes the recognition and processing of DNA lesions. A damage recognition complex composed of 2 UvrA and 2 UvrB subunits scans DNA for abnormalities. Upon binding of the UvrA(2)B(2) complex to a putative damaged site, the DNA wraps around one UvrB monomer. DNA wrap is dependent on ATP binding by UvrB and probably causes local melting of the DNA helix, facilitating insertion of UvrB beta-hairpin between the DNA strands. Then UvrB probes one DNA strand for the presence of a lesion. If a lesion is found the UvrA subunits dissociate and the UvrB-DNA preincision complex is formed. This complex is subsequently bound by UvrC and the second UvrB is released. If no lesion is found, the DNA wraps around the other UvrB subunit that will check the other stand for damage. The chain is UvrABC system protein B from Pseudomonas syringae pv. tomato (strain ATCC BAA-871 / DC3000).